The chain runs to 185 residues: Ovomucoid (185 aa).

Kazal-like domains are found at residues 1–63, 64–128, and 131–185; these read VEVD…ECRE, AVPM…ECRK, and AAVS…FGKC. Cystine bridges form between Cys5-Cys43, Cys22-Cys40, Cys30-Cys61, Cys69-Cys108, Cys86-Cys105, Cys94-Cys126, Cys137-Cys167, Cys145-Cys164, and Cys153-Cys185. Asn174 carries an N-linked (GlcNAc...) asparagine glycan.

Its subcellular location is the secreted. The chain is Ovomucoid from Meleagris gallopavo (Wild turkey).